A 150-amino-acid chain; its full sequence is Azurin (150 aa).

An N-terminal signal peptide occupies residues 1 to 21 (MFKQVLGGMALMAAFSAPVLA). The Plastocyanin-like domain maps to 22-150 (AECSVDIAGT…LMKGTLKLVD (129 aa)). Cys-24 and Cys-47 are oxidised to a cystine. The Cu cation site is built by His-67, Cys-133, His-138, and Met-142.

The protein localises to the periplasm. The chain is Azurin from Bordetella bronchiseptica (strain ATCC BAA-588 / NCTC 13252 / RB50) (Alcaligenes bronchisepticus).